We begin with the raw amino-acid sequence, 616 residues long: Elongation factor 4 (616 aa).

The region spanning Glu17 to Val203 is the tr-type G domain. Residues Asp29–Thr34 and Asn150–Asp153 contribute to the GTP site.

Belongs to the TRAFAC class translation factor GTPase superfamily. Classic translation factor GTPase family. LepA subfamily.

Its subcellular location is the cell membrane. It carries out the reaction GTP + H2O = GDP + phosphate + H(+). In terms of biological role, required for accurate and efficient protein synthesis under certain stress conditions. May act as a fidelity factor of the translation reaction, by catalyzing a one-codon backward translocation of tRNAs on improperly translocated ribosomes. Back-translocation proceeds from a post-translocation (POST) complex to a pre-translocation (PRE) complex, thus giving elongation factor G a second chance to translocate the tRNAs correctly. Binds to ribosomes in a GTP-dependent manner. The protein is Elongation factor 4 of Corynebacterium jeikeium (strain K411).